The sequence spans 278 residues: MALKTFNPTTPSQRQLVIVDRSSLYKGKPVKALTEGLTKSGGRNNLGRITARFIGGGHKRSYRLVDFKRRKFDVEGTVERIEYDPNRTAFIALVSYADGEQAYIIAPQRLAAGDKVIASEKAVDVKPGNTMPLQYIPVGSIIHNVEMKPGKGGQIARSAGSYAQLVGRDQGMAILRLNSGEQRLVSGICLASIGAVSNPDHANINDGKAGRTVWRGKRPHNRGVVMNPVDHPHGGGEGRTSGGRHPVTPWGKPTKGKRTRSNKSTDKMIMRSRHQRKK.

Residues 218-278 form a disordered region; sequence RPHNRGVVMN…IMRSRHQRKK (61 aa).

It belongs to the universal ribosomal protein uL2 family. Part of the 50S ribosomal subunit. Forms a bridge to the 30S subunit in the 70S ribosome.

In terms of biological role, one of the primary rRNA binding proteins. Required for association of the 30S and 50S subunits to form the 70S ribosome, for tRNA binding and peptide bond formation. It has been suggested to have peptidyltransferase activity; this is somewhat controversial. Makes several contacts with the 16S rRNA in the 70S ribosome. The protein is Large ribosomal subunit protein uL2 of Rhizobium etli (strain CIAT 652).